A 125-amino-acid polypeptide reads, in one-letter code: Desulfoferrodoxin homolog (125 aa).

Residues Cys10, Cys13, Cys29, Cys30, His49, His69, His75, Cys116, and His119 each contribute to the Fe cation site.

Belongs to the desulfoferrodoxin family. Fe(3+) serves as cofactor. Cu(2+) is required as a cofactor.

This chain is Desulfoferrodoxin homolog, found in Archaeoglobus fulgidus (strain ATCC 49558 / DSM 4304 / JCM 9628 / NBRC 100126 / VC-16).